Reading from the N-terminus, the 244-residue chain is 7-cyano-7-deazaguanine synthase (244 aa).

19–29 (FSGGQDSTTCL) provides a ligand contact to ATP. Residues Cys207, Cys222, Cys225, and Cys228 each coordinate Zn(2+).

This sequence belongs to the QueC family. The cofactor is Zn(2+).

It catalyses the reaction 7-carboxy-7-deazaguanine + NH4(+) + ATP = 7-cyano-7-deazaguanine + ADP + phosphate + H2O + H(+). Its pathway is purine metabolism; 7-cyano-7-deazaguanine biosynthesis. Its function is as follows. Catalyzes the ATP-dependent conversion of 7-carboxy-7-deazaguanine (CDG) to 7-cyano-7-deazaguanine (preQ(0)). The polypeptide is 7-cyano-7-deazaguanine synthase (Bordetella avium (strain 197N)).